A 134-amino-acid chain; its full sequence is Protein NrdI (134 aa).

The protein belongs to the NrdI family.

Probably involved in ribonucleotide reductase function. In Rhizobium etli (strain CIAT 652), this protein is Protein NrdI.